The sequence spans 124 residues: Fluoride-specific ion channel FluC (124 aa).

The next 4 membrane-spanning stretches (helical) occupy residues 4 to 24, 35 to 55, 60 to 80, and 102 to 122; these read LLLV…ISIF, FGTL…YALG, ISPE…TTFS, and VVLN…LVFS. Na(+) contacts are provided by Gly74 and Thr77.

It belongs to the fluoride channel Fluc/FEX (TC 1.A.43) family.

It localises to the cell inner membrane. The catalysed reaction is fluoride(in) = fluoride(out). With respect to regulation, na(+) is not transported, but it plays an essential structural role and its presence is essential for fluoride channel function. Functionally, fluoride-specific ion channel. Important for reducing fluoride concentration in the cell, thus reducing its toxicity. The chain is Fluoride-specific ion channel FluC from Shewanella baltica (strain OS223).